The primary structure comprises 980 residues: Valine--tRNA ligase (980 aa).

The 'HIGH' region signature appears at 43 to 53; sequence PNVTGTLHMGH. The 'KMSKS' region signature appears at 586–590; it reads KMSKS. ATP is bound at residue Lys-589. Residues 914-980 are a coiled coil; the sequence is LVDMDAERMR…AGLREQRGKL (67 aa).

Belongs to the class-I aminoacyl-tRNA synthetase family. ValS type 1 subfamily. In terms of assembly, monomer.

The protein resides in the cytoplasm. It catalyses the reaction tRNA(Val) + L-valine + ATP = L-valyl-tRNA(Val) + AMP + diphosphate. In terms of biological role, catalyzes the attachment of valine to tRNA(Val). As ValRS can inadvertently accommodate and process structurally similar amino acids such as threonine, to avoid such errors, it has a 'posttransfer' editing activity that hydrolyzes mischarged Thr-tRNA(Val) in a tRNA-dependent manner. The sequence is that of Valine--tRNA ligase from Xanthomonas oryzae pv. oryzae (strain PXO99A).